Reading from the N-terminus, the 225-residue chain is ATP-dependent Clp protease proteolytic subunit (225 aa).

Residue serine 123 is the Nucleophile of the active site. Residue histidine 148 is part of the active site.

The protein belongs to the peptidase S14 family. As to quaternary structure, fourteen ClpP subunits assemble into 2 heptameric rings which stack back to back to give a disk-like structure with a central cavity, resembling the structure of eukaryotic proteasomes.

Its subcellular location is the cytoplasm. The catalysed reaction is Hydrolysis of proteins to small peptides in the presence of ATP and magnesium. alpha-casein is the usual test substrate. In the absence of ATP, only oligopeptides shorter than five residues are hydrolyzed (such as succinyl-Leu-Tyr-|-NHMec, and Leu-Tyr-Leu-|-Tyr-Trp, in which cleavage of the -Tyr-|-Leu- and -Tyr-|-Trp bonds also occurs).. In terms of biological role, cleaves peptides in various proteins in a process that requires ATP hydrolysis. Has a chymotrypsin-like activity. Plays a major role in the degradation of misfolded proteins. The sequence is that of ATP-dependent Clp protease proteolytic subunit from Chlorobium chlorochromatii (strain CaD3).